Here is a 1219-residue protein sequence, read N- to C-terminus: ATP-dependent helicase/nuclease subunit A (1219 aa).

The region spanning 12–477 (TRWTDNQWKS…IDLSQNFRSR (466 aa)) is the UvrD-like helicase ATP-binding domain. 33–40 (AAAGSGKT) contacts ATP. Residues 478–786 (EEVLTTTNYL…RMMTIHSSKG (309 aa)) enclose the UvrD-like helicase C-terminal domain. Residues 997-1016 (PSKQSVSELKRQHETEQSDT) form a disordered region. Residues 1004–1016 (ELKRQHETEQSDT) are compositionally biased toward basic and acidic residues.

Belongs to the helicase family. AddA subfamily. As to quaternary structure, heterodimer of AddA and AddB/RexB. It depends on Mg(2+) as a cofactor.

It catalyses the reaction Couples ATP hydrolysis with the unwinding of duplex DNA by translocating in the 3'-5' direction.. The enzyme catalyses ATP + H2O = ADP + phosphate + H(+). In terms of biological role, the heterodimer acts as both an ATP-dependent DNA helicase and an ATP-dependent, dual-direction single-stranded exonuclease. Recognizes the chi site generating a DNA molecule suitable for the initiation of homologous recombination. The AddA nuclease domain is required for chi fragment generation; this subunit has the helicase and 3' -&gt; 5' nuclease activities. This is ATP-dependent helicase/nuclease subunit A from Staphylococcus saprophyticus subsp. saprophyticus (strain ATCC 15305 / DSM 20229 / NCIMB 8711 / NCTC 7292 / S-41).